We begin with the raw amino-acid sequence, 172 residues long: 3-hydroxydecanoyl-[acyl-carrier-protein] dehydratase (172 aa).

The active site involves His71.

This sequence belongs to the thioester dehydratase family. FabA subfamily. Homodimer.

Its subcellular location is the cytoplasm. It catalyses the reaction a (3R)-hydroxyacyl-[ACP] = a (2E)-enoyl-[ACP] + H2O. The catalysed reaction is (3R)-hydroxydecanoyl-[ACP] = (2E)-decenoyl-[ACP] + H2O. It carries out the reaction (2E)-decenoyl-[ACP] = (3Z)-decenoyl-[ACP]. It participates in lipid metabolism; fatty acid biosynthesis. Functionally, necessary for the introduction of cis unsaturation into fatty acids. Catalyzes the dehydration of (3R)-3-hydroxydecanoyl-ACP to E-(2)-decenoyl-ACP and then its isomerization to Z-(3)-decenoyl-ACP. Can catalyze the dehydratase reaction for beta-hydroxyacyl-ACPs with saturated chain lengths up to 16:0, being most active on intermediate chain length. This chain is 3-hydroxydecanoyl-[acyl-carrier-protein] dehydratase, found in Salmonella agona (strain SL483).